The chain runs to 478 residues: uncharacterized protein (478 aa).

In terms of domain architecture, RRM spans 5–85 (KRIYVGGLSS…SKLRIEEARP (81 aa)). 2 positions are modified to phosphoserine: S207 and S308.

The protein resides in the nucleus. It localises to the nucleolus. This is an uncharacterized protein from Schizosaccharomyces pombe (strain 972 / ATCC 24843) (Fission yeast).